The sequence spans 351 residues: Probable galacturonosyltransferase-like 4 (351 aa).

Over 1 to 8 (MASRSLSY) the chain is Cytoplasmic. The helical; Signal-anchor for type II membrane protein transmembrane segment at 9–29 (TQLLGLLSFILLLVTTTTMAV) threads the bilayer. The Lumenal segment spans residues 30–351 (RVGVILHKPS…YRSSRHSLEE (322 aa)). Asn-96 and Asn-203 each carry an N-linked (GlcNAc...) asparagine glycan.

The protein belongs to the glycosyltransferase 8 family.

Its subcellular location is the golgi apparatus membrane. It participates in glycan metabolism; pectin biosynthesis. Its function is as follows. May be involved in pectin and/or xylans biosynthesis in cell walls. In Arabidopsis thaliana (Mouse-ear cress), this protein is Probable galacturonosyltransferase-like 4 (GATL4).